The sequence spans 101 residues: Large ribosomal subunit protein eL21 (101 aa).

Residues Met-1 to Lys-18 show a composition bias toward basic residues. The disordered stretch occupies residues Met-1–Gly-24.

The protein belongs to the eukaryotic ribosomal protein eL21 family.

This Saccharolobus solfataricus (strain ATCC 35092 / DSM 1617 / JCM 11322 / P2) (Sulfolobus solfataricus) protein is Large ribosomal subunit protein eL21 (rpl21e).